A 1447-amino-acid polypeptide reads, in one-letter code: Adhesion G protein-coupled receptor L3 (1447 aa).

Residues Met-1–Ala-19 form the signal peptide. The Extracellular segment spans residues Phe-20–Leu-862. One can recognise an SUEL-type lectin domain in the interval Ser-35–Val-124. Disulfide bonds link Cys-36-Cys-66, Cys-45-Cys-123, Cys-78-Cys-110, Cys-91-Cys-97, and Cys-135-Cys-317. Asn-93 carries an N-linked (GlcNAc...) asparagine glycan. The region spanning Leu-134–Pro-393 is the Olfactomedin-like domain. The interaction with FLRT3 stretch occupies residues Tyr-249–Glu-279. Ca(2+) contacts are provided by Asp-264, Asn-312, Ala-313, and Val-367. The interval Asp-426–Ala-473 is disordered. The span at Ser-428 to Ser-458 shows a compositional bias: low complexity. Residues Asn-464, Asn-549, Asn-746, Asn-759, Asn-804, and Asn-830 are each glycosylated (N-linked (GlcNAc...) asparagine). The 180-residue stretch at Asp-675–Lys-854 folds into the GAIN-B domain. 2 disulfides stabilise this stretch: Cys-805–Cys-836 and Cys-824–Cys-838. The interval Cys-805–Lys-854 is GPS. The tract at residues Thr-842–His-855 is stachel. A helical transmembrane segment spans residues Leu-863–Phe-888. Over Phe-889–Arg-896 the chain is Cytoplasmic. The chain crosses the membrane as a helical span at residues Asn-897–Ile-918. Over Asn-919–Ala-926 the chain is Extracellular. A helical membrane pass occupies residues Cys-927 to Val-950. Residues Cys-927 and Cys-999 are joined by a disulfide bond. Residues Gln-951 to Arg-967 lie on the Cytoplasmic side of the membrane. Residues Lys-968–Tyr-990 traverse the membrane as a helical segment. Topologically, residues Arg-991–Thr-1005 are extracellular. Residues Tyr-1006 to Gly-1027 form a helical membrane-spanning segment. Residues Ile-1028–Trp-1053 are Cytoplasmic-facing. Residues Val-1054–Met-1073 traverse the membrane as a helical segment. At Tyr-1074–Ser-1078 the chain is on the extracellular side. Asn-1076 carries N-linked (GlcNAc...) asparagine glycosylation. The helical transmembrane segment at Thr-1079–Leu-1104 threads the bilayer. The Cytoplasmic segment spans residues Gln-1105–Leu-1447. A disordered region spans residues Gly-1123–Gly-1147. Residue Ser-1164 is modified to Phosphoserine. Residues Ile-1423–Leu-1447 are disordered. Residues His-1442 to Leu-1447 carry the PDZ-binding motif.

This sequence belongs to the G-protein coupled receptor 2 family. LN-TM7 subfamily. As to quaternary structure, heterodimer of 2 chains generated by proteolytic processing; the large extracellular N-terminal fragment and the membrane-bound C-terminal fragment predominantly remain associated and non-covalently linked. Interacts (via olfactomedin-like domain) with FLRT1 (via extracellular domain). Interacts (via olfactomedin-like domain) with FLRT2 (via extracellular domain). Interacts (via olfactomedin-like domain) with FLRT3 (via extracellular domain); the interaction is direct. Interacts (via extracellular domain) with TENM1. Interacts (via extracellular domain) with TENM2. Interacts (via extracellular domain) with TENM3. Identified in a complex with FLRT3 and UNC5B; does not interact with UNC5B by itself. Identified in a complex with FLRT3 and UNC5D; does not interact with UNC5D by itself. Interacts (via PDZ-binding motif) with SHANK3. Interacts (via PDZ-binding motif) with DLG4. In terms of processing, autoproteolytically processed at the GPS region of the GAIN-B domain; this cleavage modulates receptor activity.

It is found in the cell membrane. Its subcellular location is the postsynaptic cell membrane. The protein localises to the cell projection. It localises to the axon. The protein resides in the cell junction. Forms a heterodimer of 2 chains generated by proteolytic processing that remain associated through non-covalent interactions mediated by the GAIN-B domain. In the inactivated receptor, the Stachel sequence (also named stalk) is embedded in the GAIN-B domain, where it adopts a beta-strand conformation. On activation, the Stachel moves into the 7 transmembrane region and adopts a twisted hook-shaped configuration that forms contacts within the receptor, leading to coupling of a G-alpha protein, which activates signaling. The cleaved GAIN-B and N-terminal domains can then dissociate from the rest of the receptor. In terms of biological role, orphan adhesion G-protein coupled receptor (aGPCR), which mediates synapse specificity. Ligand binding causes a conformation change that triggers signaling via guanine nucleotide-binding proteins (G proteins) and modulates the activity of downstream effectors. ADGRL3 is coupled with different classes of G alpha proteins, such as G(12)/G(13), G(s), G(i) or G(q), depending on the context. Coupling to G(12)/G(13) G proteins, which mediates the activation Rho small GTPases is the most efficient. Following G-protein coupled receptor activation, associates with cell adhesion molecules that are expressed at the surface of adjacent cells to direct synapse specificity. Specifically mediates the establishment of Schaffer-collateral synapses formed by CA3-region axons on CA1-region pyramidal neurons in the hippocampus. Localizes to postsynaptic spines in excitatory synapses in the S.oriens and S.radiatum and interacts with presynaptic cell adhesion molecules FLRT3 and TENM2, promoting synapse formation. Plays a role in the development of glutamatergic synapses in the cortex. Important in determining the connectivity rates between the principal neurons in the cortex. Orphan adhesion G-protein coupled receptor (aGPCR), which mediates synapse specificity. Ligand binding causes a conformation change that triggers signaling via guanine nucleotide-binding proteins (G proteins) and modulates the activity of downstream effectors, such as adenylate cyclase. Isoform 1 is specifically coupled to G(s) G proteins and mediates activation of adenylate cyclase activity. Following G-protein coupled receptor activation, undergoes liquid-liquid phase transition, associates with (1) cell adhesion molecules that are expressed at the surface of adjacent cells, as well as (2) PDZ-containing proteins, such as SHANK3 and DLG4, in the cytoplasm to direct synapse formation. The protein is Adhesion G protein-coupled receptor L3 of Homo sapiens (Human).